The primary structure comprises 220 residues: UPF0502 protein VVA1225 (220 aa).

Belongs to the UPF0502 family.

The protein is UPF0502 protein VVA1225 of Vibrio vulnificus (strain YJ016).